The primary structure comprises 79 residues: Endothelin-2 (79 aa).

The interval 1–23 (PEQTAPYGLGNPPRRRRRSLPRR) is disordered. The tract at residues 24–39 (CQCSSARDPSCATFCL) is endothelin-like. The segment at 51 to 79 (SRKSPADVFQTGKTGATRGELLQRLRDIS) is disordered.

The protein belongs to the endothelin/sarafotoxin family.

The protein resides in the secreted. Its function is as follows. Endothelins are endothelium-derived vasoconstrictor peptides. This chain is Endothelin-2 (EDN2), found in Macaca fascicularis (Crab-eating macaque).